The primary structure comprises 349 residues: Alanine racemase (349 aa).

Lys35 serves as the catalytic Proton acceptor; specific for D-alanine. Residue Lys35 is modified to N6-(pyridoxal phosphate)lysine. A substrate-binding site is contributed by Arg130. Tyr244 serves as the catalytic Proton acceptor; specific for L-alanine. Met292 lines the substrate pocket.

Belongs to the alanine racemase family. Pyridoxal 5'-phosphate is required as a cofactor.

The catalysed reaction is L-alanine = D-alanine. The protein operates within amino-acid biosynthesis; D-alanine biosynthesis; D-alanine from L-alanine: step 1/1. Its function is as follows. Catalyzes the interconversion of L-alanine and D-alanine. May also act on other amino acids. This chain is Alanine racemase (alr), found in Cereibacter sphaeroides (strain ATCC 17023 / DSM 158 / JCM 6121 / CCUG 31486 / LMG 2827 / NBRC 12203 / NCIMB 8253 / ATH 2.4.1.) (Rhodobacter sphaeroides).